Reading from the N-terminus, the 303-residue chain is Target of rapamycin complex subunit LST8 (303 aa).

WD repeat units lie at residues 1–27 (MSVI…CSRT), 30–68 (HSDS…PNPV), 73–112 (GHRG…IPRN), 114–153 (KHNA…CTHQ), 157–196 (EDDT…DASH), 205–244 (AHST…KLET), and 248–287 (GHQR…IVRQ).

It belongs to the WD repeat LST8 family. In terms of assembly, the target of rapamycin complex 1 (TORC1) is composed of at least KOG1, LST8, TCO89 and either TOR1 (TORC1-A) or TOR2 (TORC1-B). TORC1 binds to and is inhibited by FKBP-rapamycin. Interacts with PIB2; following activation of PIB2 by glutamine or cysteine and as part of the TORC1 complex. The target of rapamycin complex 2 (TORC2) is composed of at least AVO1, AVO2, BIT61, LST8, TOR2 and TSC11. TORC2 forms a homodimer. Contrary to TORC1, TORC2 does not bind to and is not sensitive to FKBP-rapamycin. LST8 binds to the C-terminal kinase domain in TOR2.

It localises to the cell membrane. The protein resides in the vacuole membrane. Essential component of both TORC1 and TORC2. TORC1 regulates multiple cellular processes to control cell growth in response to environmental signals. Nutrient limitation and environmental stress signals cause inactivation of TORC1. Active TORC1 positively controls ribosome biogenesis via control of rRNA, ribosomal protein and tRNA gene expression, and rRNA processing. TORC1 positively controls protein biosynthesis by regulation of mRNA stability, translation initiation factor activity, and high-affinity amino acid permeases that serve to provide amino acids for use by the translation machinery. TORC1 also promotes growth by sequestering a number of nutrient and general stress-responsive transcription factors in the cytoplasm. TORC1 negatively controls macroautophagy, a process to recycle surplus cytoplasmic mass under nutrient starvation conditions. LST8 is involved in the negative regulation of transcription factors GLN3 and RTG1-RTG3, limiting the synthesis of alpha-ketoglutarate, glutamate and glutamine. LST8 is required for targeting of amino acid permeases (AAPs) to the plasma membrane. TORC2 regulates cell cycle-dependent polarization of the actin-cytoskeleton, cell wall integrity, and receptor endocytosis. TORC2 controls polarity of the actin cytoskeleton, which is required for orienting the secretory pathway toward discrete growth sites, via the RHO1/PKC1/MAPK cell integrity pathway. LST8 is involved in maintenance of cell wall integrity. LST8 modulates TOR2 kinase activity. This chain is Target of rapamycin complex subunit LST8, found in Saccharomyces cerevisiae (strain ATCC 204508 / S288c) (Baker's yeast).